A 461-amino-acid chain; its full sequence is MDYRVEKDTIGEIQVPADKYWGAQTQRSKQNFPIGNEKMPVEIIKAFAILKRSTAEANFELGLMERDKMEAIQYAADQVLNDSLTDHFPLVVWQTGSGTQSNMNVNEVLAFVGNKWLQEQGSDLKLHPNDDVNKSQSSNDTYPTAMHIAAVLKLEDTVLPALSQLKNTFAEKQSAFENIVKIGRTHLQDATPLTLGQEISGWHRMLEKSETMISESLEHLRELAIGGTAVGTGLNAHPDFSEKVCKAISTFTNKKFISAKNKFHSLTSHDETVYAHGALKGLAADLMKIANDVRWLASGPRCGIGEITIPANEPGSSIMPGKVNPTQSEAVTMVVTQVMGNDAAIGFAASQGNFELNVFKPVIAYNFLQSSQLLADSIISFDERCAVGIEPNHEQIEKNLNDSLMLVTALNPHIGYENAAKIAKKAFADNSTLKETAVELGLLTEEQFDEYVNPEEMTYPK.

Substrate contacts are provided by residues 97-99 (SGT), 127-130 (HPND), 137-139 (SSN), and Thr185. The active-site Proton donor/acceptor is His186. Ser316 is an active-site residue. Substrate-binding positions include Ser317 and 322–324 (KVN).

Belongs to the class-II fumarase/aspartase family. Fumarase subfamily. As to quaternary structure, homotetramer.

The protein resides in the cytoplasm. It catalyses the reaction (S)-malate = fumarate + H2O. It participates in carbohydrate metabolism; tricarboxylic acid cycle; (S)-malate from fumarate: step 1/1. Involved in the TCA cycle. Catalyzes the stereospecific interconversion of fumarate to L-malate. The chain is Fumarate hydratase class II from Oceanobacillus iheyensis (strain DSM 14371 / CIP 107618 / JCM 11309 / KCTC 3954 / HTE831).